Reading from the N-terminus, the 128-residue chain is MGIQGGSVLFGLLLILAVFCHSGHSLQCYSCPYSTARCTTTTNCTSNLDSCLIAKAGLRVYYRCWKFEDCTFRQLSNQLSENELKYHCCRENLCNFNGILENGGTTLSKKTVLLLVTPFLAAAWSLHP.

The first 25 residues, 1-25 (MGIQGGSVLFGLLLILAVFCHSGHS), serve as a signal peptide directing secretion. The UPAR/Ly6 domain occupies 26–108 (LQCYSCPYST…ILENGGTTLS (83 aa)). Disulfide bonds link C28-C51, C31-C38, C44-C64, C70-C88, and C89-C94. N-linked (GlcNAc...) asparagine glycosylation is present at N43. A lipid anchor (GPI-anchor amidated asparagine) is attached at N102. Residues 103 to 128 (GGTTLSKKTVLLLVTPFLAAAWSLHP) constitute a propeptide, removed in mature form.

As to quaternary structure, interacts with T-cell surface antigen CD2. In terms of processing, N- and O-glycosylated.

The protein resides in the cell membrane. Its subcellular location is the secreted. Functionally, potent inhibitor of the complement membrane attack complex (MAC) action, which protects self-cells from damage during complement activation. Acts by binding to the beta-haipins of C8 (C8A and C8B) components of the assembling MAC, forming an intermolecular beta-sheet that prevents incorporation of the multiple copies of C9 required for complete formation of the osmolytic pore. This chain is CD59 glycoprotein, found in Callithrix sp. (Marmoset).